Reading from the N-terminus, the 118-residue chain is MPFLELDTNLPANRVPAGLEKRLCAAAASILGKPADRVNVTVRPGLAMALSGSTEPCAQLSISSIGVVGTAEDNRSHSAHFFEFLTKELALGQDRILIRFFPLESWQIGKIGTVMTFL.

N-acetylproline is present on Pro-2. N6-acetyllysine is present on Lys-33.

This sequence belongs to the MIF family. In terms of assembly, homotrimer. As to expression, highly expressed in the liver and at lower levels in the heart, lung and pancreas.

It is found in the cytoplasm. It catalyses the reaction D-dopachrome + H(+) = 5,6-dihydroxyindole + CO2. In terms of biological role, tautomerization of D-dopachrome with decarboxylation to give 5,6-dihydroxyindole (DHI). This Homo sapiens (Human) protein is D-dopachrome decarboxylase (DDT).